The following is a 1029-amino-acid chain: mRNA 3'-end-processing protein rna14 (1029 aa).

2 disordered regions span residues 1 to 177 (MAEE…PDVS) and 225 to 251 (GNVQ…PHDR). The segment covering 21-32 (VDYKAVEEHGAD) has biased composition (basic and acidic residues). Composition is skewed to polar residues over residues 43–79 (KTLQ…NSVQ) and 104–119 (TSTM…QPKT). Positions 127 to 140 (VEDEDEDDAGDADY) are enriched in acidic residues. Positions 153 to 175 (TVATNVPQQSVSGNENEASSTPD) are enriched in polar residues. Positions 229–243 (DSATATPTPDSPSTS) are enriched in low complexity. HAT repeat units lie at residues 281 to 313 (NRFD…MESE), 315 to 346 (NDLY…YVRR), 357 to 392 (QARR…FIKS), 406 to 439 (QKMD…FEMG), 469 to 509 (ITRD…WEKG), and 521 to 553 (AFKG…FCFL). Disordered regions lie at residues 634 to 664 (TFAK…ESVK), 853 to 951 (TAVR…GSPA), and 996 to 1023 (IPLP…SPSL). Positions 894–908 (SPKRPLEDFDDDYNR) are enriched in basic and acidic residues. 2 stretches are compositionally biased toward polar residues: residues 932–949 (RSQL…SQGS) and 1006–1023 (GTTQ…SPSL).

Its subcellular location is the nucleus. The protein localises to the cytoplasm. Functionally, component of the cleavage factor IA (CFIA) complex, which is involved in the endonucleolytic cleavage during polyadenylation-dependent pre-mRNA 3'-end formation. The chain is mRNA 3'-end-processing protein rna14 (rna14) from Aspergillus fumigatus (strain ATCC MYA-4609 / CBS 101355 / FGSC A1100 / Af293) (Neosartorya fumigata).